A 160-amino-acid chain; its full sequence is MASTPNSVTLYTDGACSMNPGPGGYGAVILYGDGRREELSAGYKMTTNNRMEIMGAIAALSHLQEPSQVLLYTDSRYMVDAMSKGWAKKWKANGWQRNAKEKAKNPDLWETMLTLCEKHQVTFQWVKAHAGNKENERCDRLAVAAYQNNPNLVDEGFGKF.

Positions 4-147 (TPNSVTLYTD…CDRLAVAAYQ (144 aa)) constitute an RNase H type-1 domain. Residues Asp13, Glu52, Asp74, and Asp139 each coordinate Mg(2+).

It belongs to the RNase H family. In terms of assembly, monomer. Mg(2+) is required as a cofactor.

The protein localises to the cytoplasm. It carries out the reaction Endonucleolytic cleavage to 5'-phosphomonoester.. Its function is as follows. Endonuclease that specifically degrades the RNA of RNA-DNA hybrids. The sequence is that of Ribonuclease HI (rnhA) from Synechocystis sp. (strain ATCC 27184 / PCC 6803 / Kazusa).